We begin with the raw amino-acid sequence, 213 residues long: Pyrrolidone-carboxylate peptidase (213 aa).

Catalysis depends on residues glutamate 78, cysteine 141, and histidine 165.

Belongs to the peptidase C15 family. Homotetramer.

It is found in the cytoplasm. The catalysed reaction is Release of an N-terminal pyroglutamyl group from a polypeptide, the second amino acid generally not being Pro.. Functionally, removes 5-oxoproline from various penultimate amino acid residues except L-proline. The chain is Pyrrolidone-carboxylate peptidase from Finegoldia magna (strain ATCC 29328 / DSM 20472 / WAL 2508) (Peptostreptococcus magnus).